The sequence spans 389 residues: Lipid-A-disaccharide synthase (389 aa).

Belongs to the LpxB family.

The catalysed reaction is a lipid X + a UDP-2-N,3-O-bis[(3R)-3-hydroxyacyl]-alpha-D-glucosamine = a lipid A disaccharide + UDP + H(+). It functions in the pathway bacterial outer membrane biogenesis; LPS lipid A biosynthesis. In terms of biological role, condensation of UDP-2,3-diacylglucosamine and 2,3-diacylglucosamine-1-phosphate to form lipid A disaccharide, a precursor of lipid A, a phosphorylated glycolipid that anchors the lipopolysaccharide to the outer membrane of the cell. The chain is Lipid-A-disaccharide synthase from Burkholderia orbicola (strain MC0-3).